The primary structure comprises 369 residues: S-(hydroxymethyl)glutathione dehydrogenase (369 aa).

Residues Cys-40, His-62, Cys-92, Cys-95, Cys-98, Cys-106, and Cys-169 each contribute to the Zn(2+) site.

Belongs to the zinc-containing alcohol dehydrogenase family. Class-III subfamily. In terms of assembly, homodimer. Requires Zn(2+) as cofactor.

The protein resides in the cytoplasm. The enzyme catalyses S-(hydroxymethyl)glutathione + NADP(+) = S-formylglutathione + NADPH + H(+). The catalysed reaction is S-(hydroxymethyl)glutathione + NAD(+) = S-formylglutathione + NADH + H(+). It catalyses the reaction a primary alcohol + NAD(+) = an aldehyde + NADH + H(+). It carries out the reaction a secondary alcohol + NAD(+) = a ketone + NADH + H(+). The enzyme catalyses S-nitrosoglutathione + NADH + H(+) = S-(hydroxysulfenamide)glutathione + NAD(+). In terms of biological role, has high formaldehyde dehydrogenase activity in the presence of glutathione and catalyzes the oxidation of normal alcohols in a reaction that is not GSH-dependent. In addition, hemithiolacetals other than those formed from GSH, including omega-thiol fatty acids, also are substrates. Also acts as a S-nitroso-glutathione reductase by catalyzing the NADH-dependent reduction of S-nitrosoglutathione. The polypeptide is S-(hydroxymethyl)glutathione dehydrogenase (frmA) (Escherichia coli (strain SMS-3-5 / SECEC)).